We begin with the raw amino-acid sequence, 40 residues long: Dolichyl-diphosphooligosaccharide--protein glycosyltransferase subunit 4 (40 aa).

The Lumenal portion of the chain corresponds to 1–4; sequence MITD. The chain crosses the membrane as a helical span at residues 5-25; sequence VQLAIFSNVLGVFLFLLVVAY. The Cytoplasmic portion of the chain corresponds to 26-40; the sequence is HYINANTGKSSIKTK.

This sequence belongs to the OST4 family. As to quaternary structure, component of the oligosaccharyltransferase (OST) complex.

The protein resides in the endoplasmic reticulum membrane. Functionally, subunit of the oligosaccharyl transferase (OST) complex that catalyzes the initial transfer of a defined glycan (Glc(3)Man(9)GlcNAc(2) in eukaryotes) from the lipid carrier dolichol-pyrophosphate to an asparagine residue within an Asn-X-Ser/Thr consensus motif in nascent polypeptide chains, the first step in protein N-glycosylation. N-glycosylation occurs cotranslationally and the complex associates with the Sec61 complex at the channel-forming translocon complex that mediates protein translocation across the endoplasmic reticulum (ER). All subunits are required for a maximal enzyme activity. The protein is Dolichyl-diphosphooligosaccharide--protein glycosyltransferase subunit 4 of Drosophila virilis (Fruit fly).